Consider the following 178-residue polypeptide: ATP synthase subunit delta (178 aa).

The protein belongs to the ATPase delta chain family. In terms of assembly, F-type ATPases have 2 components, F(1) - the catalytic core - and F(0) - the membrane proton channel. F(1) has five subunits: alpha(3), beta(3), gamma(1), delta(1), epsilon(1). F(0) has three main subunits: a(1), b(2) and c(10-14). The alpha and beta chains form an alternating ring which encloses part of the gamma chain. F(1) is attached to F(0) by a central stalk formed by the gamma and epsilon chains, while a peripheral stalk is formed by the delta and b chains.

It is found in the cell inner membrane. Its function is as follows. F(1)F(0) ATP synthase produces ATP from ADP in the presence of a proton or sodium gradient. F-type ATPases consist of two structural domains, F(1) containing the extramembraneous catalytic core and F(0) containing the membrane proton channel, linked together by a central stalk and a peripheral stalk. During catalysis, ATP synthesis in the catalytic domain of F(1) is coupled via a rotary mechanism of the central stalk subunits to proton translocation. This protein is part of the stalk that links CF(0) to CF(1). It either transmits conformational changes from CF(0) to CF(1) or is implicated in proton conduction. In Hahella chejuensis (strain KCTC 2396), this protein is ATP synthase subunit delta.